The sequence spans 68 residues: Protein SrnB (68 aa).

The helical transmembrane segment at 23 to 42 threads the bilayer; it reads YALIGLLAVCATVLCFSLIF.

Belongs to the Hok/Gef family.

Its subcellular location is the cell inner membrane. Its function is as follows. Toxic component of a type I toxin-antitoxin (TA) system. Its normal function is believed to be effective plasmid stabilization through postsegregational killing of cells that have lost the F plasmid. Promotes degradation of stable RNA in E.coli. The protein is Protein SrnB (srnB) of Escherichia coli (strain K12).